The chain runs to 425 residues: MSPAFRAMDVEPRTKGILLEPFVHQVGGHSCVLRFNETTLCKPLIPREHQFYETLPAEMRKFTPQYKGVVSVCFEEDEDRNLCLIAYPLKGDHGTVDLVDNSDCEPKSKVLRWTTKKHHVLESEKTPKEWVRQHRKEEKMKSHKLEEEFEWLKKSEVLYYSVEKKGNVSSQLKHYNPWSMKCHQQQLQRMKENAKHRNQYKFILLENLTSRYEVPCVLDLKMGTRQHGDDASEEKAANQIRKCQQSTSAVIGVRVCGMQVYQAGSGQLMFMNKYHGRKLSVQGFKEALFQFFHNGRYLRRELLGPVLKKLAELKAVLERQESYRFYSSSLLVIYDGKEWPEVALDSDAEDLEDLSEESADESAGAYAYKPIGASSVDVRMIDFAHTTCRLYGEDSVVHEGQDAGYIFGLQSLIDIVTEISEDSGE.

ATP contacts are provided by residues 206 to 208 (ENL) and Asp219. Substrate is bound by residues 215–223 (PCVLDLKMG), Lys221, and 235–242 (KAANQIRK). Residue Asp382 coordinates ATP. His385 serves as a coordination point for substrate.

It belongs to the inositol phosphokinase (IPK) family. Detected in kidney, intestine, liver and heart.

The protein resides in the nucleus. The enzyme catalyses 1D-myo-inositol hexakisphosphate + ATP = 5-diphospho-1D-myo-inositol 1,2,3,4,6-pentakisphosphate + ADP. The protein operates within phospholipid metabolism; phosphatidylinositol metabolism. Functionally, converts inositol hexakisphosphate (InsP6) to diphosphoinositol pentakisphosphate (InsP7/PP-InsP5). The protein is Inositol hexakisphosphate kinase 2 (IP6K2) of Oryctolagus cuniculus (Rabbit).